The sequence spans 290 residues: Signal recognition particle receptor subunit beta (290 aa).

The helical transmembrane segment at 44 to 64 (VLLLALFTLIFIIIISKLFGS) threads the bilayer. GTP-binding positions include 92-100 (GLSNAGKTA), 114-117 (THTS), glycine 140, and alanine 268.

This sequence belongs to the SRP receptor beta subunit family. As to quaternary structure, heterodimer of an alpha and a beta chain.

It is found in the endoplasmic reticulum membrane. Component of the signal recognition particle (SRP) complex receptor (SR). Ensures, in conjunction with the SRP complex, the correct targeting of the nascent secretory proteins to the endoplasmic reticulum membrane system. May mediate the membrane association of SR. This chain is Signal recognition particle receptor subunit beta (srprb), found in Dictyostelium discoideum (Social amoeba).